We begin with the raw amino-acid sequence, 232 residues long: Dof zinc finger protein DOF4.3 (232 aa).

Residues 25–79 form a Dof-type zinc finger; the sequence is RVCARCDSDNTKFCYYNNYSEFQPRYFCKNCRRYWTHGGALRNVPIGGSSRAKRT. Zn(2+)-binding residues include Cys-27, Cys-30, Cys-52, and Cys-55.

The protein localises to the nucleus. Its function is as follows. Transcription factor that binds specifically to a 5'-AA[AG]G-3' consensus core sequence. This is Dof zinc finger protein DOF4.3 (DOF4.3) from Arabidopsis thaliana (Mouse-ear cress).